Here is a 432-residue protein sequence, read N- to C-terminus: Tyrosine-protein phosphatase non-receptor type 1 (432 aa).

At Met-1 the chain carries N-acetylmethionine. Residues 3 to 277 form the Tyrosine-protein phosphatase domain; the sequence is MEKEFEEIDK…RFSYLAVIEG (275 aa). At Tyr-20 the chain carries Phosphotyrosine. Position 50 is a phosphoserine; by CLK1, CLK2 and PKB/AKT1 or PKB/AKT2 (Ser-50). Tyr-66 carries the post-translational modification Phosphotyrosine; by EGFR. Substrate contacts are provided by residues Asp-181 and 215 to 221; that span reads CSAGIGR. The active-site Phosphocysteine intermediate is Cys-215. Cys-215 bears the Cysteine persulfide mark. Cys-215 bears the S-nitrosocysteine; in reversibly inhibited form mark. Phosphoserine; by CLK1 and CLK2 occurs at positions 242 and 243. Position 262 (Gln-262) interacts with substrate. 2 disordered regions span residues 297–322 and 335–399; these read EDLDLPPEHVPPPPRPPKRTLEPHNG and SEET…EEHK. Phosphoserine occurs at positions 335, 362, and 364. The span at 354 to 364 shows a compositional bias: low complexity; sequence SSAMHSVSSMS. Thr-367 bears the Phosphothreonine mark.

It belongs to the protein-tyrosine phosphatase family. Non-receptor class 1 subfamily. As to quaternary structure, interacts with EPHA3 (phosphorylated); dephosphorylates EPHA3 and may regulate its trafficking and function. Interacts with MET. Interacts with NCK1. In terms of processing, ser-50 is the major site of phosphorylation as compared to Ser-242 and Ser-243. Activated by phosphorylation at Ser-50. Post-translationally, S-nitrosylation of Cys-215 inactivates the enzyme activity. Sulfhydration at Cys-215 following endoplasmic reticulum stress inactivates the enzyme activity, promoting EIF2AK3/PERK activity. As to expression, most abundant in testis. Also found in kidney, spleen, muscle, liver, heart and brain.

It localises to the endoplasmic reticulum membrane. The catalysed reaction is O-phospho-L-tyrosyl-[protein] + H2O = L-tyrosyl-[protein] + phosphate. Its function is as follows. Tyrosine-protein phosphatase which acts as a regulator of endoplasmic reticulum unfolded protein response. Mediates dephosphorylation of EIF2AK3/PERK; inactivating the protein kinase activity of EIF2AK3/PERK. May play an important role in CKII- and p60c-src-induced signal transduction cascades. May regulate the EFNA5-EPHA3 signaling pathway which modulates cell reorganization and cell-cell repulsion. May also regulate the hepatocyte growth factor receptor signaling pathway through dephosphorylation of MET. This is Tyrosine-protein phosphatase non-receptor type 1 (Ptpn1) from Mus musculus (Mouse).